A 485-amino-acid chain; its full sequence is AP2-like ethylene-responsive transcription factor TOE2 (485 aa).

The span at 124 to 135 shows a compositional bias: gly residues; sequence GDFIGSGSGGGD. The disordered stretch occupies residues 124–161; that stretch reads GDFIGSGSGGGDASRVMQPPSQPVKKSRRGPRSKSSQY. The AP2/ERF DNA-binding region spans 160-216; sequence QYRGVTFYRRTGRWESHIWDCGKQVYLGGFDTAHAAARAYDRAAVKFRGLEADINFV.

The protein belongs to the AP2/ERF transcription factor family. AP2 subfamily.

The protein localises to the nucleus. In terms of biological role, probably acts as a transcriptional activator. Binds to the GCC-box pathogenesis-related promoter element. May be involved in the regulation of gene expression by stress factors and by components of stress signal transduction pathways. Regulates negatively the transition to flowering time and confers flowering time delay. The protein is AP2-like ethylene-responsive transcription factor TOE2 (TOE2) of Arabidopsis thaliana (Mouse-ear cress).